A 460-amino-acid chain; its full sequence is ATP synthase subunit beta (460 aa).

An ATP-binding site is contributed by 150 to 157 (GGAGVGKT).

Belongs to the ATPase alpha/beta chains family. In terms of assembly, F-type ATPases have 2 components, CF(1) - the catalytic core - and CF(0) - the membrane proton channel. CF(1) has five subunits: alpha(3), beta(3), gamma(1), delta(1), epsilon(1). CF(0) has three main subunits: a(1), b(2) and c(9-12). The alpha and beta chains form an alternating ring which encloses part of the gamma chain. CF(1) is attached to CF(0) by a central stalk formed by the gamma and epsilon chains, while a peripheral stalk is formed by the delta and b chains.

The protein localises to the cell inner membrane. The catalysed reaction is ATP + H2O + 4 H(+)(in) = ADP + phosphate + 5 H(+)(out). Functionally, produces ATP from ADP in the presence of a proton gradient across the membrane. The catalytic sites are hosted primarily by the beta subunits. The chain is ATP synthase subunit beta from Erwinia tasmaniensis (strain DSM 17950 / CFBP 7177 / CIP 109463 / NCPPB 4357 / Et1/99).